The primary structure comprises 447 residues: Na(+)-translocating NADH-quinone reductase subunit A (447 aa).

This sequence belongs to the NqrA family. Composed of six subunits; NqrA, NqrB, NqrC, NqrD, NqrE and NqrF.

It catalyses the reaction a ubiquinone + n Na(+)(in) + NADH + H(+) = a ubiquinol + n Na(+)(out) + NAD(+). NQR complex catalyzes the reduction of ubiquinone-1 to ubiquinol by two successive reactions, coupled with the transport of Na(+) ions from the cytoplasm to the periplasm. NqrA to NqrE are probably involved in the second step, the conversion of ubisemiquinone to ubiquinol. In Neisseria meningitidis serogroup B (strain ATCC BAA-335 / MC58), this protein is Na(+)-translocating NADH-quinone reductase subunit A.